The chain runs to 326 residues: L-lactate dehydrogenase (326 aa).

NAD(+) contacts are provided by residues valine 20, aspartate 41, lysine 46, tyrosine 71, and 85 to 86 (GA). Substrate is bound by residues glutamine 88 and arginine 94. Residues serine 107, 124-126 (AAN), and serine 149 each bind NAD(+). 126–129 (NPVD) lines the substrate pocket. 154–157 (DTAR) contributes to the substrate binding site. Residues arginine 159, 171 to 174 (RSVH), and histidine 174 contribute to the beta-D-fructose 1,6-bisphosphate site. Histidine 181 acts as the Proton acceptor in catalysis. Tyrosine 226 is modified (phosphotyrosine). Threonine 235 is a substrate binding site.

The protein belongs to the LDH/MDH superfamily. LDH family. In terms of assembly, homotetramer.

The protein resides in the cytoplasm. The catalysed reaction is (S)-lactate + NAD(+) = pyruvate + NADH + H(+). Its pathway is fermentation; pyruvate fermentation to lactate; (S)-lactate from pyruvate: step 1/1. Allosterically activated by fructose 1,6-bisphosphate (FBP) alone under acidic conditions, while it requires additional activation factors such as divalent cations (Mn(2+)) under neutral conditions. Under acidic conditions, Mn(2+) is an inhibitor in the absence of fructose 1,6-bisphosphate (FBP). In case of L.casei, L-LDH binds four fructose 1,6-bisphosphate (FBP) molecules per tetramer, while usual allosteric L-LDH binds only two fructose 1,6-bisphosphate (FBP) molecules per tetramer. In terms of biological role, catalyzes the conversion of lactate to pyruvate. The chain is L-lactate dehydrogenase from Lacticaseibacillus casei (Lactobacillus casei).